We begin with the raw amino-acid sequence, 307 residues long: Ribonuclease Z (307 aa).

The Zn(2+) site is built by His-63, His-65, Asp-67, His-68, His-143, Asp-213, and His-271. Asp-67 functions as the Proton acceptor in the catalytic mechanism.

This sequence belongs to the RNase Z family. In terms of assembly, homodimer. It depends on Zn(2+) as a cofactor.

It catalyses the reaction Endonucleolytic cleavage of RNA, removing extra 3' nucleotides from tRNA precursor, generating 3' termini of tRNAs. A 3'-hydroxy group is left at the tRNA terminus and a 5'-phosphoryl group is left at the trailer molecule.. Zinc phosphodiesterase, which displays some tRNA 3'-processing endonuclease activity. Probably involved in tRNA maturation, by removing a 3'-trailer from precursor tRNA. This chain is Ribonuclease Z, found in Lactococcus lactis subsp. cremoris (strain MG1363).